The sequence spans 70 residues: Beta-defensin 43 (70 aa).

Positions 1-22 (MRLLLSILGVLTLLSILPLARS) are cleaved as a signal peptide. Cystine bridges form between Cys-29/Cys-57 and Cys-36/Cys-50.

The protein belongs to the beta-defensin family.

Its subcellular location is the secreted. Its function is as follows. Has bactericidal activity. The sequence is that of Beta-defensin 43 (Defb43) from Rattus norvegicus (Rat).